Reading from the N-terminus, the 232-residue chain is MKINTKSKKVNKAWFNDHIHDTYVKLAHKEGYRSRAAYKIKEIDETCGLIRPGQVVVDLGAVPGAWSQYVRRRFAPREAGVGGAAAGELNGRIIALDLLPFEPLEGVAFLQGDFCEEAVLAQLVGLLDGRAVDVVLSDMAPNLSGVEVTDAARIANLVELALEFAQSHLKPQGALVCKVFHGSGYSQLVDQFKRTFRVVKAVKPKASRDRSAETFLVGIGLKSTGMPNADAV.

S-adenosyl-L-methionine-binding residues include Gly-64, Trp-66, Asp-97, Asp-113, and Asp-138. Lys-178 functions as the Proton acceptor in the catalytic mechanism.

Belongs to the class I-like SAM-binding methyltransferase superfamily. RNA methyltransferase RlmE family.

Its subcellular location is the cytoplasm. It carries out the reaction uridine(2552) in 23S rRNA + S-adenosyl-L-methionine = 2'-O-methyluridine(2552) in 23S rRNA + S-adenosyl-L-homocysteine + H(+). Its function is as follows. Specifically methylates the uridine in position 2552 of 23S rRNA at the 2'-O position of the ribose in the fully assembled 50S ribosomal subunit. The polypeptide is Ribosomal RNA large subunit methyltransferase E (Leptothrix cholodnii (strain ATCC 51168 / LMG 8142 / SP-6) (Leptothrix discophora (strain SP-6))).